The following is a 159-amino-acid chain: Putative RING-H2 finger protein ATL69 (159 aa).

A helical transmembrane segment spans residues 13 to 33 (LGYGIAIAVSILVLISFIMLA). The RING-type; atypical zinc finger occupies 94-136 (CSICLCDYEAREPVRCIPECNHCFHTDCVDEWLRTSATCPLCR).

The protein belongs to the RING-type zinc finger family. ATL subfamily.

The protein resides in the membrane. The enzyme catalyses S-ubiquitinyl-[E2 ubiquitin-conjugating enzyme]-L-cysteine + [acceptor protein]-L-lysine = [E2 ubiquitin-conjugating enzyme]-L-cysteine + N(6)-ubiquitinyl-[acceptor protein]-L-lysine.. It functions in the pathway protein modification; protein ubiquitination. The chain is Putative RING-H2 finger protein ATL69 (ATL69) from Arabidopsis thaliana (Mouse-ear cress).